The chain runs to 557 residues: DNA mismatch repair protein MutL (557 aa).

It belongs to the DNA mismatch repair MutL/HexB family.

Its function is as follows. This protein is involved in the repair of mismatches in DNA. It is required for dam-dependent methyl-directed DNA mismatch repair. May act as a 'molecular matchmaker', a protein that promotes the formation of a stable complex between two or more DNA-binding proteins in an ATP-dependent manner without itself being part of a final effector complex. In Methanothrix thermoacetophila (strain DSM 6194 / JCM 14653 / NBRC 101360 / PT) (Methanosaeta thermophila), this protein is DNA mismatch repair protein MutL.